The following is a 305-amino-acid chain: ATP synthase subunit gamma, mitochondrial (305 aa).

The protein belongs to the ATPase gamma chain family. F-type ATPases have 2 components, F(1) - the catalytic core - and F(o) - the membrane proton channel. F(1) has five subunits: alpha(3), beta(3), gamma(1), delta(1), epsilon(1), plus the additional subunit P18 (Tb427.05.1710) that is not present in F(1)F(o) ATP synthase from metazoa. Subunit P18 (Tb927.5.1710) interacts with the alpha subunit with a 1:1 stoichiometry; the interaction is direct. Subunit gamma is part of the central stalk. F(o) has three main subunits: a, b and c. The trypanosomal ATPase complex contains additional subunits that are not present in the F(1)F(o) ATP synthase from metazoa.

The protein localises to the mitochondrion. It localises to the mitochondrion inner membrane. Mitochondrial membrane ATP synthase (F(1)F(o) ATP synthase) produces ATP from ADP in the presence of a proton gradient across the membrane which is generated by electron transport complexes of the respiratory chain. F-type ATPases consist of two structural domains, F(1) - containing the extramembraneous catalytic core, and F(o) - containing the membrane proton channel, linked together by a central stalk and a peripheral stalk. During catalysis, ATP synthesis in the catalytic domain of F(1) is coupled via a rotary mechanism of the central stalk subunits to proton translocation. Subunits alpha and beta form the catalytic core in F(1). Rotation of the central stalk against the surrounding alpha(3)beta(3) subunits leads to hydrolysis of ATP in three separate catalytic sites on the beta subunits. Contrary to the procyclic, insect form that requires F(1)F(o) ATP synthase for ATP synthesis, the bloodstream form relies on ATP hydrolysis by F(1)F(o) ATP synthase to maintain its mitochondrial membrane potential. The chain is ATP synthase subunit gamma, mitochondrial from Trypanosoma brucei brucei.